The chain runs to 376 residues: MTETPQRPRRLRVLAAMSGGVDSAVAAARAAEAGHDVTGVHLALSANPQSFRTGARGCCTIEDSRDARRAADVIGIPFYVWDLAERFREDVVEDFIAEYEAGRTPNPCLRCNEKIKFAALLDKALALGFDAVCTGHYAQVIVREDGTRELHRASDMAKDQSYVLGVLDDRQLAHALFPLGDTVTTKDEIRAEAERRGLAVAKKPDSHDICFIADGDTQGFLANRLGKAEGDIVDESGSVVGSHEGAYGFTIGQRKGLRIGTPAPDGKPRYVLDISPVDNTVTVGPAAALDVTALTAIKPRWCGAAPTGPGTYTAQLRAHGGETQVTAELVDGELQVTFAEPVRGVAPGQAVVLYDGTRVVGSATIATTTRTATAVA.

Residues 16 to 23 (AMSGGVDS) and L42 each bind ATP. Residue C111 is the Nucleophile of the active site. C111 and C210 are disulfide-bonded. G135 lines the ATP pocket. The interval 158–160 (KDQ) is interaction with tRNA. The active-site Cysteine persulfide intermediate is C210.

This sequence belongs to the MnmA/TRMU family.

It localises to the cytoplasm. The catalysed reaction is S-sulfanyl-L-cysteinyl-[protein] + uridine(34) in tRNA + AH2 + ATP = 2-thiouridine(34) in tRNA + L-cysteinyl-[protein] + A + AMP + diphosphate + H(+). Catalyzes the 2-thiolation of uridine at the wobble position (U34) of tRNA, leading to the formation of s(2)U34. In Streptomyces avermitilis (strain ATCC 31267 / DSM 46492 / JCM 5070 / NBRC 14893 / NCIMB 12804 / NRRL 8165 / MA-4680), this protein is tRNA-specific 2-thiouridylase MnmA.